The chain runs to 452 residues: Enolase (452 aa).

A (2R)-2-phosphoglycerate-binding site is contributed by Q167. E209 acts as the Proton donor in catalysis. Residues D250, E307, and D334 each contribute to the Mg(2+) site. (2R)-2-phosphoglycerate contacts are provided by K359, R388, S389, and K410. K359 serves as the catalytic Proton acceptor.

The protein belongs to the enolase family. It depends on Mg(2+) as a cofactor.

Its subcellular location is the cytoplasm. The protein localises to the secreted. It localises to the cell surface. It carries out the reaction (2R)-2-phosphoglycerate = phosphoenolpyruvate + H2O. It functions in the pathway carbohydrate degradation; glycolysis; pyruvate from D-glyceraldehyde 3-phosphate: step 4/5. Its function is as follows. Catalyzes the reversible conversion of 2-phosphoglycerate (2-PG) into phosphoenolpyruvate (PEP). It is essential for the degradation of carbohydrates via glycolysis. In Mesomycoplasma hyopneumoniae (strain 7448) (Mycoplasma hyopneumoniae), this protein is Enolase.